Consider the following 763-residue polypeptide: Translation initiation factor IF-2, chloroplastic (763 aa).

Disordered stretches follow at residues 1–22 (MFLNNQNFEKKTSSYSTNNNSS), 52–122 (IDKS…SNSA), and 149–168 (NNKIPQQKKQQVASSIDQSI). Residues 13–22 (SSYSTNNNSS) show a composition bias toward low complexity. The segment covering 73 to 92 (RIDKKNKNFNKAHDLLDNKK) has biased composition (basic and acidic residues). Residues 93-104 (NKNRQRKKIKNK) are compositionally biased toward basic residues. Residues 151-168 (KIPQQKKQQVASSIDQSI) show a composition bias toward polar residues. The 169-residue stretch at 261 to 429 (NRPPVVTILG…ILLLAELENL (169 aa)) folds into the tr-type G domain. GTP contacts are provided by residues 270–277 (GHVDHGKT), 316–320 (DTPGH), and 370–373 (SKID).

It belongs to the TRAFAC class translation factor GTPase superfamily. Classic translation factor GTPase family. IF-2 subfamily.

Its subcellular location is the plastid. The protein localises to the chloroplast. Functionally, one of the essential components for the initiation of protein synthesis. Protects formylmethionyl-tRNA from spontaneous hydrolysis and promotes its binding to the 30S ribosomal subunits. Also involved in the hydrolysis of GTP during the formation of the 70S ribosomal complex. The polypeptide is Translation initiation factor IF-2, chloroplastic (infB) (Porphyra purpurea (Red seaweed)).